Reading from the N-terminus, the 720-residue chain is MFNKHSVEIDWGGRPLKLETGKIARQADGAVVATYGETVVLATVVAAKTPREGVDFLPLTVDYQEKTYAAGRIPGGYFKREGRPSEKETLVSRLIDRPVRPLFADGWRNETQVIVTVLSHDMENDPDVLAMVAASAALTLSGAPFRGPIGAARVGFMNDEYVLNPTLDEMVDTQLELVVAGTADAVLMVESEAKELSEDIMLGAVMFGHRHFQPVINAIIELAEKAAKEPREVSQADDSALEKEMLGLIEGELRPAYAIADKQQRQNAVAAAKAKVIAHYFPEGQEPKYDKLRIAAVFKHLEAKIVRWNILDTGKRIDGRDAKTVRNILAEVGVLPRAHGSALFTRGETQAMVVTTLGTGEDEQYIDALSGTYKETFLLHYNFPPYSVGETGRLGSTKRREIGHGKLAWRAIHPVLPPHHEFPYTIRVVSEITESNGSSSMASVCGASLSLMDAGVPLKRPTAGIAMGLILEGSRYAVLSDILGDEDHLGDMDFKVAGTEVGISSLQMDIKIAGITEEIMKVALAQAREGRIHILGEMAKALTNARAELGEYAPRIETFKIPTDKIREVIGTGGKVIREIVEKTGAKINIEDDGTVKVASNDGEAMKAAIKWIKSIASDPEVGQIYEGTVVKVMEFGAFVNFFGAKDGLVHISQLAANRVQKSSDIVKEGDKVKVKLLGFDDRGKTRLSMKAVDQQTGEDLEAAGHKAEKADAPREAAGE.

Positions 487 and 493 each coordinate Mg(2+). A KH domain is found at 554–613 (PRIETFKIPTDKIREVIGTGGKVIREIVEKTGAKINIEDDGTVKVASNDGEAMKAAIKWI). Residues 623-691 (GQIYEGTVVK…DRGKTRLSMK (69 aa)) form the S1 motif domain. Residues 691–720 (KAVDQQTGEDLEAAGHKAEKADAPREAAGE) form a disordered region. A compositionally biased stretch (basic and acidic residues) spans 703 to 720 (AAGHKAEKADAPREAAGE).

Belongs to the polyribonucleotide nucleotidyltransferase family. It depends on Mg(2+) as a cofactor.

The protein localises to the cytoplasm. It carries out the reaction RNA(n+1) + phosphate = RNA(n) + a ribonucleoside 5'-diphosphate. Functionally, involved in mRNA degradation. Catalyzes the phosphorolysis of single-stranded polyribonucleotides processively in the 3'- to 5'-direction. This chain is Polyribonucleotide nucleotidyltransferase, found in Nitrobacter hamburgensis (strain DSM 10229 / NCIMB 13809 / X14).